A 118-amino-acid polypeptide reads, in one-letter code: Large ribosomal subunit protein bL20 (118 aa).

It belongs to the bacterial ribosomal protein bL20 family.

Binds directly to 23S ribosomal RNA and is necessary for the in vitro assembly process of the 50S ribosomal subunit. It is not involved in the protein synthesizing functions of that subunit. In Yersinia pseudotuberculosis serotype O:1b (strain IP 31758), this protein is Large ribosomal subunit protein bL20.